The primary structure comprises 157 residues: Protein FAM162B (157 aa).

The helical transmembrane segment at Ala-104–Ala-123 threads the bilayer.

Belongs to the UPF0389 family.

It is found in the membrane. The chain is Protein FAM162B (Fam162b) from Mus musculus (Mouse).